The following is a 213-amino-acid chain: Pyridoxine/pyridoxamine 5'-phosphate oxidase (213 aa).

FMN-binding positions include Arg-60 to Lys-65, Tyr-75 to Ser-76, Lys-82, and Gln-104. Lys-65 is a substrate binding site. 3 residues coordinate substrate: Tyr-122, Arg-126, and Ser-130. Residues Gln-139–Ser-140 and Trp-184 each bind FMN. Position 190 to 192 (Arg-190 to His-192) interacts with substrate. FMN is bound at residue Arg-194.

Belongs to the pyridoxamine 5'-phosphate oxidase family. Homodimer. FMN serves as cofactor.

The enzyme catalyses pyridoxamine 5'-phosphate + O2 + H2O = pyridoxal 5'-phosphate + H2O2 + NH4(+). The catalysed reaction is pyridoxine 5'-phosphate + O2 = pyridoxal 5'-phosphate + H2O2. It functions in the pathway cofactor metabolism; pyridoxal 5'-phosphate salvage; pyridoxal 5'-phosphate from pyridoxamine 5'-phosphate: step 1/1. It participates in cofactor metabolism; pyridoxal 5'-phosphate salvage; pyridoxal 5'-phosphate from pyridoxine 5'-phosphate: step 1/1. Catalyzes the oxidation of either pyridoxine 5'-phosphate (PNP) or pyridoxamine 5'-phosphate (PMP) into pyridoxal 5'-phosphate (PLP). The chain is Pyridoxine/pyridoxamine 5'-phosphate oxidase from Rhodopseudomonas palustris (strain BisB18).